The primary structure comprises 343 residues: Palmitoyltransferase ZDHHC4 (343 aa).

The Lumenal segment spans residues Met1–Asp2. Residues Phe3–Ile23 traverse the membrane as a helical segment. The Cytoplasmic segment spans residues Phe24–Thr67. Residues Phe68 to Phe88 form a helical membrane-spanning segment. Residues Gly89–Tyr100 lie on the Lumenal side of the membrane. A helical membrane pass occupies residues Leu101 to Ala121. Topologically, residues Asn122–Tyr193 are cytoplasmic. Residues Ser149 to Leu199 form the DHHC domain. The active-site S-palmitoyl cysteine intermediate is the Cys179. Residues Phe194–Ala214 traverse the membrane as a helical segment. Residues Phe215–Arg255 lie on the Lumenal side of the membrane. The chain crosses the membrane as a helical span at residues Ile256 to Phe276. The Cytoplasmic segment spans residues Ala277 to Lys343. Residues Lys340–Lys343 carry the Di-lysine motif motif.

The protein belongs to the DHHC palmitoyltransferase family. As to quaternary structure, interacts with CPT1A.

The protein resides in the endoplasmic reticulum membrane. It localises to the golgi apparatus membrane. The protein localises to the cell membrane. It catalyses the reaction L-cysteinyl-[protein] + hexadecanoyl-CoA = S-hexadecanoyl-L-cysteinyl-[protein] + CoA. Palmitoyltransferase that could catalyze the addition of palmitate onto protein substrates including the D(2) dopamine receptor DRD2, GSK3B or MAVS. Mediates GSK3B palmitoylation to prevent its AKT1-mediated phosphorylation leading to activation of the STAT3 signaling pathway. Also catalyzes MAVS palmitoylation which promotes its stabilization and activation by inhibiting 'Lys-48'- but facilitating 'Lys-63'-linked ubiquitination. The protein is Palmitoyltransferase ZDHHC4 of Mus musculus (Mouse).